The sequence spans 766 residues: Protein translocase subunit SecA 2 (766 aa).

ATP is bound by residues Gln84, 102 to 106 (GEGKT), and Asp490.

Belongs to the SecA family. As to quaternary structure, monomer and homodimer. Part of the essential Sec protein translocation apparatus which comprises SecA, SecYEG and auxiliary proteins SecDF. Other proteins may also be involved.

Its subcellular location is the cell membrane. The protein resides in the cytoplasm. It catalyses the reaction ATP + H2O + cellular proteinSide 1 = ADP + phosphate + cellular proteinSide 2.. Its function is as follows. Part of the Sec protein translocase complex. Interacts with the SecYEG preprotein conducting channel. Has a central role in coupling the hydrolysis of ATP to the transfer of proteins into and across the cell membrane, serving as an ATP-driven molecular motor driving the stepwise translocation of polypeptide chains across the membrane. This chain is Protein translocase subunit SecA 2, found in Thermobifida fusca (strain YX).